We begin with the raw amino-acid sequence, 494 residues long: Ketol-acid reductoisomerase (NADP(+)) (494 aa).

The KARI N-terminal Rossmann domain maps to 14–208 (LDQLGRCRFM…GGHRAGCLES (195 aa)). NADP(+) contacts are provided by residues 45 to 48 (CGAQ), Arg-68, Arg-76, Ser-78, and 108 to 110 (DKQ). His-132 is a catalytic residue. Gly-158 serves as a coordination point for NADP(+). KARI C-terminal knotted domains follow at residues 209–344 (SFVA…NYPE) and 345–487 (SDVE…MSDM). Residues Asp-217, Glu-221, Glu-389, and Glu-393 each coordinate Mg(2+). Ser-414 provides a ligand contact to substrate.

Belongs to the ketol-acid reductoisomerase family. Mg(2+) is required as a cofactor.

It carries out the reaction (2R)-2,3-dihydroxy-3-methylbutanoate + NADP(+) = (2S)-2-acetolactate + NADPH + H(+). It catalyses the reaction (2R,3R)-2,3-dihydroxy-3-methylpentanoate + NADP(+) = (S)-2-ethyl-2-hydroxy-3-oxobutanoate + NADPH + H(+). It participates in amino-acid biosynthesis; L-isoleucine biosynthesis; L-isoleucine from 2-oxobutanoate: step 2/4. Its pathway is amino-acid biosynthesis; L-valine biosynthesis; L-valine from pyruvate: step 2/4. Its function is as follows. Involved in the biosynthesis of branched-chain amino acids (BCAA). Catalyzes an alkyl-migration followed by a ketol-acid reduction of (S)-2-acetolactate (S2AL) to yield (R)-2,3-dihydroxy-isovalerate. In the isomerase reaction, S2AL is rearranged via a Mg-dependent methyl migration to produce 3-hydroxy-3-methyl-2-ketobutyrate (HMKB). In the reductase reaction, this 2-ketoacid undergoes a metal-dependent reduction by NADPH to yield (R)-2,3-dihydroxy-isovalerate. The polypeptide is Ketol-acid reductoisomerase (NADP(+)) (Aliivibrio fischeri (strain ATCC 700601 / ES114) (Vibrio fischeri)).